The primary structure comprises 183 residues: Oleosin 5 (183 aa).

The tract at residues 1–39 is polar; it reads MADVRTHSHQLQVHPQRQHEGGIKVLYPQSGPSSTQVLA. 3 helical membrane-spanning segments follow: residues 37–57, 66–86, and 87–107; these read VLAVFVGVPIGGTLLTIAGLT, MLAFPLFLIFSPVIVPAAFVI, and GLAMTGFLASGAIGLTGLSSM. The interval 40-113 is hydrophobic; it reads VFVGVPIGGT…LSSMSWVLNY (74 aa). Positions 144-183 are disordered; the sequence is KDAGQTIEDKAHDVREAKTFDVRDRDTTKGTHNVRDTKTT.

It belongs to the oleosin family.

It is found in the lipid droplet. Its subcellular location is the membrane. Functionally, may have a structural role to stabilize the lipid body during desiccation of the seed by preventing coalescence of the oil. Probably interacts with both lipid and phospholipid moieties of lipid bodies. May also provide recognition signals for specific lipase anchorage in lipolysis during seedling growth. In Arabidopsis thaliana (Mouse-ear cress), this protein is Oleosin 5.